A 134-amino-acid polypeptide reads, in one-letter code: Large ribosomal subunit protein bL17 (134 aa).

This sequence belongs to the bacterial ribosomal protein bL17 family. Part of the 50S ribosomal subunit. Contacts protein L32.

This Thioalkalivibrio sulfidiphilus (strain HL-EbGR7) protein is Large ribosomal subunit protein bL17.